We begin with the raw amino-acid sequence, 121 residues long: MVYAIVETGGKQVLVQPGRFYDVELLALDVEAALTFDKVLLVRHEGGAVVGRPTVEGAAVQGRILQHGKAAKVTVYKMRPKKGYRRKKGHRQRFTRVMIESIDFEGRSFTAEAKAEAVSST.

Belongs to the bacterial ribosomal protein bL21 family. Part of the 50S ribosomal subunit. Contacts protein L20.

Functionally, this protein binds to 23S rRNA in the presence of protein L20. The protein is Large ribosomal subunit protein bL21 of Gloeobacter violaceus (strain ATCC 29082 / PCC 7421).